The sequence spans 294 residues: tRNA pseudouridine synthase B (294 aa).

D39 acts as the Nucleophile in catalysis.

The protein belongs to the pseudouridine synthase TruB family. Type 1 subfamily.

It carries out the reaction uridine(55) in tRNA = pseudouridine(55) in tRNA. Responsible for synthesis of pseudouridine from uracil-55 in the psi GC loop of transfer RNAs. This chain is tRNA pseudouridine synthase B, found in Streptococcus pyogenes serotype M2 (strain MGAS10270).